The primary structure comprises 141 residues: Hemoglobin subunit alpha (141 aa).

In terms of domain architecture, Globin spans 1-141 (VLSPGDKSNI…VSTVLTSKYR (141 aa)). Serine 3 bears the Phosphoserine mark. N6-succinyllysine is present on residues lysine 7 and lysine 11. Lysine 16 bears the N6-acetyllysine; alternate mark. The residue at position 16 (lysine 16) is an N6-succinyllysine; alternate. Tyrosine 24 carries the phosphotyrosine modification. At serine 35 the chain carries Phosphoserine. Lysine 40 is modified (N6-succinyllysine). Serine 49 is modified (phosphoserine). Histidine 58 serves as a coordination point for O2. Residue histidine 87 participates in heme b binding. Position 102 is a phosphoserine (serine 102). Threonine 108 is subject to Phosphothreonine. Phosphoserine is present on serine 124. 2 positions are modified to phosphothreonine: threonine 134 and threonine 137. Phosphoserine is present on serine 138.

The protein belongs to the globin family. Heterotetramer of two alpha chains and two beta chains. In terms of tissue distribution, red blood cells.

In terms of biological role, involved in oxygen transport from the lung to the various peripheral tissues. Its function is as follows. Hemopressin acts as an antagonist peptide of the cannabinoid receptor CNR1. Hemopressin-binding efficiently blocks cannabinoid receptor CNR1 and subsequent signaling. The sequence is that of Hemoglobin subunit alpha (HBA) from Tupaia glis (Common tree shrew).